A 276-amino-acid chain; its full sequence is Large ribosomal subunit protein uL2 (276 aa).

Positions 221–276 (RGSAMNPNDHPHGGGEGRAPIGRKSPMTPWGKKARGVKTRDRKKASNALIIRRRTK) are disordered. Positions 252 to 276 (KKARGVKTRDRKKASNALIIRRRTK) are enriched in basic residues.

Belongs to the universal ribosomal protein uL2 family. As to quaternary structure, part of the 50S ribosomal subunit. Forms a bridge to the 30S subunit in the 70S ribosome.

One of the primary rRNA binding proteins. Required for association of the 30S and 50S subunits to form the 70S ribosome, for tRNA binding and peptide bond formation. It has been suggested to have peptidyltransferase activity; this is somewhat controversial. Makes several contacts with the 16S rRNA in the 70S ribosome. The polypeptide is Large ribosomal subunit protein uL2 (Aster yellows phytoplasma).